We begin with the raw amino-acid sequence, 316 residues long: Probable porphobilinogen deaminase (316 aa).

An S-(dipyrrolylmethanemethyl)cysteine modification is found at cysteine 234.

Belongs to the HMBS family. Requires dipyrromethane as cofactor.

It carries out the reaction 4 porphobilinogen + H2O = hydroxymethylbilane + 4 NH4(+). It functions in the pathway porphyrin-containing compound metabolism; protoporphyrin-IX biosynthesis; coproporphyrinogen-III from 5-aminolevulinate: step 2/4. Its function is as follows. Tetrapolymerization of the monopyrrole PBG into the hydroxymethylbilane pre-uroporphyrinogen in several discrete steps. This chain is Probable porphobilinogen deaminase, found in Methanosarcina mazei (strain ATCC BAA-159 / DSM 3647 / Goe1 / Go1 / JCM 11833 / OCM 88) (Methanosarcina frisia).